A 727-amino-acid chain; its full sequence is Prolyl endopeptidase-like (727 aa).

Active-site charge relay system residues include S559, D645, and H690.

It belongs to the peptidase S9A family. In terms of assembly, homodimer. Interacts with the AP-1 complex.

Its subcellular location is the cytoplasm. The protein resides in the cytosol. The protein localises to the golgi apparatus. It is found in the trans-Golgi network. It localises to the cytoskeleton. Its subcellular location is the nucleus. Functionally, serine peptidase whose precise substrate specificity remains unclear. Does not cleave peptides after a arginine or lysine residue. Regulates trans-Golgi network morphology and sorting by regulating the membrane binding of the AP-1 complex. May play a role in the regulation of synaptic vesicle exocytosis. This is Prolyl endopeptidase-like (PREPL) from Macaca fascicularis (Crab-eating macaque).